A 307-amino-acid polypeptide reads, in one-letter code: Protein ORANGE, chloroplastic (307 aa).

Residues 1 to 55 constitute a chloroplast transit peptide; the sequence is MSSLGRILSVSYPPDPYTWRFSQYKLSSSLGRNRRLRWRFTALDPESSSLDSESS. Residue Lys58 forms a Glycyl lysine isopeptide (Lys-Gly) (interchain with G-Cter in ubiquitin) linkage. The next 2 membrane-spanning stretches (helical) occupy residues 146–166 and 199–219; these read VYYA…GLLA and IVAS…VVEV. Residues 208–299 are CR-type-like; the sequence is VGVISALMVV…CTGMAMASEH (92 aa). A CXXCXGXG motif repeat occupies 230–237; the sequence is CKYCLGTG. The stretch at 241–248 is one CXXCXXXG motif repeat; it reads CARCSSTG. The CXXCXGXG motif repeat unit spans residues 274–281; sequence CSNCSGAG. One copy of the CXXCXXXG motif repeat lies at 285-292; sequence CPTCLCTG.

The protein belongs to the orange-like family. As to quaternary structure, interacts with the phytoene synthase PSY1 in chloroplast. Binds to the eukaryotic release factor eRF1-2. Interacts with the transcription factor TCP14 in the nucleus to repress chloroplast biogenesis in etiolated seedlings. Associates to the E2 ubiquitin-conjugating enzyme UBC19. Ubiquitination at K-58 by UBC19 is essential for nuclear localization.

The protein resides in the plastid. Its subcellular location is the chloroplast membrane. The protein localises to the nucleus. It localises to the cytoplasm. Functionally, involved in chromoplast differentiation. Associated with a cellular process that triggers the differentiation of pro-plastids or other non-colored plastids into chromoplasts for carotenoid accumulation. Is associated with carotenoid accumulation in chromoplasts. Functions as a major regulator of the phytoene synthase PSY1 protein level and activity. Modulates carotenoid biosynthesis by means of post-transcriptional regulation of PSY1. Modulates carotenoid biosynthesis in part by up-regulating a series of endogenous carotenogenic genes. Regulates cell elongation in the petiole in an eRF1-2-dependent manner. Binds to and represses TCP14 transactivation activity, thus preventing early light-induced proteins (ELIPs, e.g. ELIP1 and ELIP2) expression and delaying chloroplast biogenesis (e.g. lower chlorophyll biosynthesis and slower development of thylakoid membranes) in germinating cotyledons and etiolated seedlings; reduced levels upon illumination combined to TCP14 accumulation derepress chloroplast biogenesis during deetiolation. This chain is Protein ORANGE, chloroplastic, found in Arabidopsis thaliana (Mouse-ear cress).